A 215-amino-acid chain; its full sequence is Large ribosomal subunit protein uL4 (215 aa).

Residues 43 to 97 (RRQGTHSTKTRAEVSGGGKKPWRQKGTGRARAGSTRSPIWVGGGKTHTPKPRDYS) form a disordered region.

It belongs to the universal ribosomal protein uL4 family. Part of the 50S ribosomal subunit.

Functionally, one of the primary rRNA binding proteins, this protein initially binds near the 5'-end of the 23S rRNA. It is important during the early stages of 50S assembly. It makes multiple contacts with different domains of the 23S rRNA in the assembled 50S subunit and ribosome. Forms part of the polypeptide exit tunnel. The polypeptide is Large ribosomal subunit protein uL4 (Brachyspira pilosicoli (Serpulina pilosicoli)).